Consider the following 1106-residue polypeptide: Zinc finger protein GLI1 (1106 aa).

Positions 1–20 are SNAG domain; sequence MFNSMTPPPISSYGEPCCLR. The interval 120–124 is interaction with SUFU; it reads SYGHL. C2H2-type zinc fingers lie at residues 235-260, 268-295, 301-325, 331-356, and 362-387; these read TDCR…NSEH, FVCH…MRRH, HKCT…LRSH, YMCE…NRTH, and YVCK…KTVH. The segment at 283–291 is interaction with DNA; the sequence is KAQYMLVVH. Interaction with DNA stretches follow at residues 345 to 350 and 375 to 381; these read ASDRAK and DPSSLRK. Disordered stretches follow at residues 375-485, 516-580, 732-792, 817-889, and 914-942; these read DPSS…DEGP, GLKL…SLPG, YGGP…LYPG, EQGC…PTHS, and GRED…SRAK. Basic and acidic residues predominate over residues 413–428; sequence EPKREREGGPIREESR. Residues 442 to 463 are compositionally biased toward polar residues; the sequence is PGAQSSCSSDHSPAGSAANTDS. Residue Lys-518 is modified to N6-acetyllysine. Composition is skewed to low complexity over residues 544–560 and 737–753; these read SSSS…RRSS and GAAA…SLPL. Residues 754–766 are compositionally biased toward pro residues; sequence GPGPPTNYGPNPC. Over residues 768–779 the composition is skewed to polar residues; sequence QQASYPDPTQET. A Glycyl lysine isopeptide (Lys-Gly) (interchain with G-Cter in SUMO2) cross-link involves residue Lys-1003. The segment at 1054–1087 is disordered; sequence DEPQGLSPPPSHDQRGSSGHTPPPSGPPNMAVGN.

It belongs to the GLI C2H2-type zinc-finger protein family. As to quaternary structure, interacts with KIF7. Interacts with STK36. Interacts with ZIC1; the interaction enhances transcription activation. Interacts with SUFU; this inhibits transcriptional activation by GLI1. In terms of processing, phosphorylated in vitro by ULK3. Acetylation at Lys-518 down-regulates transcriptional activity. Deacetylated by HDAC1. Post-translationally, ubiquitinated by the CRL2(FEM1B) complex, suppressing GLI1 transcriptional activator activity. In terms of tissue distribution, detected in testis (at protein level). Testis, myometrium and fallopian tube. Also expressed in the brain with highest expression in the cerebellum, optic nerve and olfactory tract. Isoform 1 is detected in brain, spleen, pancreas, liver, kidney and placenta; isoform 2 is not detectable in these tissues.

Its subcellular location is the cytoplasm. It is found in the nucleus. Its function is as follows. Acts as a transcriptional activator. Binds to the DNA consensus sequence 5'-GACCACCCA-3'. Regulates the transcription of specific genes during normal development. Plays a role in craniofacial development and digital development, as well as development of the central nervous system and gastrointestinal tract. Mediates SHH signaling. Plays a role in cell proliferation and differentiation via its role in SHH signaling. Acts as a transcriptional activator, but activates a different set of genes than isoform 1. Activates expression of CD24, unlike isoform 1. Mediates SHH signaling. Promotes cancer cell migration. The sequence is that of Zinc finger protein GLI1 (GLI1) from Homo sapiens (Human).